A 240-amino-acid chain; its full sequence is tRNA (guanine-N(7)-)-methyltransferase (240 aa).

A compositionally biased stretch (polar residues) spans 1-10 (MTESQDTPIT). Residues 1–20 (MTESQDTPITTDGEARPHRR) are disordered. S-adenosyl-L-methionine is bound by residues E70, E95, D122, and D145. The active site involves D145. Substrate is bound by residues K149, D181, and 218–221 (TKFE).

Belongs to the class I-like SAM-binding methyltransferase superfamily. TrmB family.

It carries out the reaction guanosine(46) in tRNA + S-adenosyl-L-methionine = N(7)-methylguanosine(46) in tRNA + S-adenosyl-L-homocysteine. Its pathway is tRNA modification; N(7)-methylguanine-tRNA biosynthesis. Its function is as follows. Catalyzes the formation of N(7)-methylguanine at position 46 (m7G46) in tRNA. In Pseudomonas putida (strain W619), this protein is tRNA (guanine-N(7)-)-methyltransferase.